The sequence spans 75 residues: Xibalbin-13 2 (75 aa).

The first 27 residues, 1–27 (MKEANTRRYIYLCLVVVLLSIIITTEA), serve as a signal peptide directing secretion. Positions 28–30 (EDD) are excised as a propeptide. Disulfide bonds link C34–C49, C41–C54, C48–C65, and C56–C63.

This sequence belongs to the xibalbin-13 family. As to expression, expressed by the venom gland and the whole body.

It is found in the secreted. Probable neurotoxin. Strongly inhibits voltage-gated potassium channels (Kv1.1/KCNA1, Kv1.2/KCNA2, Kv1.3/KCNA3, and Kv1.6/KCNA6, with the highest toxicity against Kv1.1 (85.1% inhibition at 1 uM)) and mildly inhibits sodium channels (Nav1.2/SCN2A, Nav1.4/SCN4A, Nav1.5/SCN5A, Nav1.6/SCN8A, and BgNav). Induces activation of protein kinase A type II (PKA-II) and MAP kinase Erk1/2 in primary nociceptive and non-nociceptive sensory neurons. Does not show cytotoxic activity. Does not have an impact on Ca2+, cAMP, and NO signaling in the cell types analyzed. Does not interfere with the adhesion of leukocytes to endothelial cells. The sequence is that of Xibalbin-13 2 from Xibalbanus tulumensis (Blind cave remipede).